The chain runs to 211 residues: tRNA (guanine-N(7)-)-methyltransferase (211 aa).

The S-adenosyl-L-methionine site is built by glutamate 43, aspartate 68, asparagine 95, and asparagine 117. Substrate is bound at residue lysine 121. Positions arginine 123–arginine 128 are interaction with RNA. Residues aspartate 153 and threonine 190 to glutamate 193 each bind substrate.

This sequence belongs to the class I-like SAM-binding methyltransferase superfamily. TrmB family.

It carries out the reaction guanosine(46) in tRNA + S-adenosyl-L-methionine = N(7)-methylguanosine(46) in tRNA + S-adenosyl-L-homocysteine. The protein operates within tRNA modification; N(7)-methylguanine-tRNA biosynthesis. In terms of biological role, catalyzes the formation of N(7)-methylguanine at position 46 (m7G46) in tRNA. This is tRNA (guanine-N(7)-)-methyltransferase from Clostridium tetani (strain Massachusetts / E88).